The following is a 59-amino-acid chain: Inner kinetochore subunit fta6 (59 aa).

Component of the inner kinetochore constitutive centromere-associated network (CCAN) (also known as central kinetochore Sim4 complex in fission yeast), which is composed of at least cnl2, cnp3, cnp20, fta1, fta2, fta3, fta4, fta6, fta7, mal2, mhf1, mhf2, mis6, mis15, mis17, sim4 and wip1.

The protein resides in the nucleus. It localises to the chromosome. It is found in the centromere. Its subcellular location is the kinetochore. The protein localises to the cytoplasm. The protein resides in the cytoskeleton. It localises to the microtubule organizing center. It is found in the spindle pole body. Functionally, component of the kinetochore, a multiprotein complex that assembles on centromeric DNA and attaches chromosomes to spindle microtubules, mediating chromosome segregation and sister chromatid segregation during meiosis and mitosis. Component of the inner kinetochore constitutive centromere-associated network (CCAN), which serves as a structural platform for outer kinetochore assembly. The chain is Inner kinetochore subunit fta6 (fta6) from Schizosaccharomyces pombe (strain 972 / ATCC 24843) (Fission yeast).